The chain runs to 400 residues: Enolase (400 aa).

A (2R)-2-phosphoglycerate-binding site is contributed by glutamine 154. Glutamate 197 acts as the Proton donor in catalysis. The Mg(2+) site is built by aspartate 233, glutamate 274, and aspartate 301. Residues lysine 326, arginine 355, serine 356, and lysine 377 each contribute to the (2R)-2-phosphoglycerate site. The active-site Proton acceptor is lysine 326.

The protein belongs to the enolase family. Mg(2+) is required as a cofactor.

Its subcellular location is the cytoplasm. It localises to the secreted. The protein resides in the cell surface. It catalyses the reaction (2R)-2-phosphoglycerate = phosphoenolpyruvate + H2O. Its pathway is carbohydrate degradation; glycolysis; pyruvate from D-glyceraldehyde 3-phosphate: step 4/5. Its function is as follows. Catalyzes the reversible conversion of 2-phosphoglycerate (2-PG) into phosphoenolpyruvate (PEP). It is essential for the degradation of carbohydrates via glycolysis. The protein is Enolase of Picrophilus torridus (strain ATCC 700027 / DSM 9790 / JCM 10055 / NBRC 100828 / KAW 2/3).